The sequence spans 508 residues: Probable cytosol aminopeptidase (508 aa).

The Mn(2+) site is built by Lys-274 and Asp-279. The active site involves Lys-286. Mn(2+)-binding residues include Asp-297, Asp-356, and Glu-358. Residue Arg-360 is part of the active site.

The protein belongs to the peptidase M17 family. It depends on Mn(2+) as a cofactor.

It is found in the cytoplasm. It carries out the reaction Release of an N-terminal amino acid, Xaa-|-Yaa-, in which Xaa is preferably Leu, but may be other amino acids including Pro although not Arg or Lys, and Yaa may be Pro. Amino acid amides and methyl esters are also readily hydrolyzed, but rates on arylamides are exceedingly low.. The enzyme catalyses Release of an N-terminal amino acid, preferentially leucine, but not glutamic or aspartic acids.. Presumably involved in the processing and regular turnover of intracellular proteins. Catalyzes the removal of unsubstituted N-terminal amino acids from various peptides. The chain is Probable cytosol aminopeptidase from Paraburkholderia xenovorans (strain LB400).